Reading from the N-terminus, the 73-residue chain is Eukaryotic translation initiation factor 4 gamma 2 (73 aa).

Residues 1–70 (QVHCYNSNFP…ETAEEEESEE (70 aa)) form the W2 domain.

It belongs to the eukaryotic initiation factor 4G family. In terms of assembly, interacts with the serine/threonine protein kinases MKNK1 and MKNK2. Binds EIF4A and EIF3. In terms of processing, phosphorylation; hyperphosphorylated during mitosis.

In terms of biological role, appears to play a role in the switch from cap-dependent to IRES-mediated translation during mitosis, apoptosis and viral infection. Cleaved by some caspases and viral proteases. The polypeptide is Eukaryotic translation initiation factor 4 gamma 2 (EIF4G2) (Gallus gallus (Chicken)).